Reading from the N-terminus, the 132-residue chain is Agouti-signaling protein (132 aa).

The N-terminal stretch at 1-22 (MDVTRLLLATLLVFLCFFTAYS) is a signal peptide. A glycan (N-linked (GlcNAc...) asparagine) is linked at N39. Residues 58-88 (KSKQMSRKEAEKKRSSKKEASMKKVARPRTP) are disordered. Over residues 63–79 (SRKEAEKKRSSKKEASM) the composition is skewed to basic and acidic residues. Disulfide bonds link C93/C108, C100/C114, C107/C125, C111/C132, and C116/C123. Residues 93-132 (CVATRDSCKPPAPACCDPCASCQCRFFRSACSCRVLSLNC) form the Agouti domain.

The protein localises to the secreted. Functionally, involved in the regulation of melanogenesis. The binding of ASP to MC1R precludes alpha-MSH initiated signaling and thus blocks production of cAMP, leading to a down-regulation of eumelanogenesis (brown/black pigment) and thus increasing synthesis of pheomelanin (yellow/red pigment). This Cercopithecus mitis (Blue monkey) protein is Agouti-signaling protein (ASIP).